The primary structure comprises 230 residues: UPF0173 metal-dependent hydrolase Sca_1312 (230 aa).

It belongs to the UPF0173 family.

This is UPF0173 metal-dependent hydrolase Sca_1312 from Staphylococcus carnosus (strain TM300).